We begin with the raw amino-acid sequence, 260 residues long: 23S rRNA (guanosine-2'-O-)-methyltransferase RlmB (260 aa).

S-adenosyl-L-methionine contacts are provided by G197, I217, and L226.

The protein belongs to the class IV-like SAM-binding methyltransferase superfamily. RNA methyltransferase TrmH family. RlmB subfamily.

It localises to the cytoplasm. It catalyses the reaction guanosine(2251) in 23S rRNA + S-adenosyl-L-methionine = 2'-O-methylguanosine(2251) in 23S rRNA + S-adenosyl-L-homocysteine + H(+). Its function is as follows. Specifically methylates the ribose of guanosine 2251 in 23S rRNA. The sequence is that of 23S rRNA (guanosine-2'-O-)-methyltransferase RlmB from Nitrosomonas europaea (strain ATCC 19718 / CIP 103999 / KCTC 2705 / NBRC 14298).